The chain runs to 486 residues: Cytochrome P450 monooxygenase aclC (486 aa).

A heme-binding site is contributed by Cys-427.

The protein belongs to the cytochrome P450 family. Requires heme as cofactor.

The protein operates within mycotoxin biosynthesis. Functionally, cytochrome P450 monooxygenase; part of the gene cluster that mediates the biosynthesis of aspirochlorine (or antibiotic A30641), an unusual halogenated spiro compound with distinctive antifungal properties due to selective inhibition of protein biosynthesis, and which is also active against bacteria, viruses, and murine tumor cells. The non-ribosomal peptide synthetase (NRPS) aclP is responsible the formation of the diketopiperazine (DKP) core from the condensation of 2 phenylalanine residues. One Phe residue is tailored into chlorotyrosine by hydroxylation and chlorination, whereas the second Phe undergoes an unprecedented C-C bond cleavage to be converted into glycine. After formation of the DKP, sulfur is incorporated into the DKP by conjugation with glutathione by aclG, followed by its stepwise degradation to the thiol by aclI, aclJ and aclK, and the dithiol oxidation by aclT. In addition, oxygenases (aclB, aclC, aclL and aclO) and O-methyltransferases (aclM and aclU) act as tailoring enzymes to produce the intermediate dechloroaspirochlorine. Ultimately, chlorination of dechloroaspirochlorine by the halogenase aclH is the last step in the aspirochlorine pathway. The polypeptide is Cytochrome P450 monooxygenase aclC (Aspergillus oryzae (strain ATCC 42149 / RIB 40) (Yellow koji mold)).